A 379-amino-acid polypeptide reads, in one-letter code: MVSSILRDARRIVIKVGSSLVTNEGRGLDETAITEWSRQMAALVNGSGGPRREVIMVSSGAIAEGMKRLGWSARPSEIHELQAAAAVGQMGLAQMYETKLREQGLGSAQVLLTHADLADRERYLNARSTLLTLLRLGVVPVINENDTVVTDEIKFGDNDTLGALVANLVEADALVILTDQKGLYTADPRRDPHAQFVHEAAAGDPSLEAMAGGVGTSIGRGGMITKIIAARRAAGSGASTVIAWGREPDVLLRLTQGEAIGTLLVAQTAKKQARKQWMADHLQLRGAVTVDVGAAAKLRQEGKSLLPIGMVAVEGEFSRGDVIAVRDAAGAEIARGLANYASAEARLLCRRPSSEFERLLGYSAEPEMVHRDNLVLSGG.

K15 lines the ATP pocket. The substrate site is built by S59, D146, and N158. Residue T178 to D179 coordinates ATP. Residues R285 to S363 enclose the PUA domain.

It belongs to the glutamate 5-kinase family.

Its subcellular location is the cytoplasm. It carries out the reaction L-glutamate + ATP = L-glutamyl 5-phosphate + ADP. It functions in the pathway amino-acid biosynthesis; L-proline biosynthesis; L-glutamate 5-semialdehyde from L-glutamate: step 1/2. Catalyzes the transfer of a phosphate group to glutamate to form L-glutamate 5-phosphate. The protein is Glutamate 5-kinase of Paracidovorax citrulli (strain AAC00-1) (Acidovorax citrulli).